The primary structure comprises 305 residues: MARTDDDSWDLASSVGATATMVAAQRALASHVPNPLINDPYAEPLVRAVGIEYFTKLASGAFDPEQMAGLVQLGITADGMANGMASRTWYYDTAFESSTAAGVRQAVILASGLDTRAYRLTWPAGTTVYELDQPEVITFKTDTLAELGASPSAERRTVAIDLREDWPAALQAAGFDPEQPTVWSAEGLLIYLPPEAQDRLFASITELSAPGSRLVCEQVPGLETADFSKARELTRQFAGETLDLDLESLVYTQERQMAADWLAEHGWTVITEENDELYARLNLDPPNPLLRSIFPNIVYVDATLG.

Residues D132 and 161 to 162 (DL) each bind S-adenosyl-L-methionine.

It belongs to the UPF0677 family.

Its function is as follows. Exhibits S-adenosyl-L-methionine-dependent methyltransferase activity. This chain is Putative S-adenosyl-L-methionine-dependent methyltransferase MAB_3787, found in Mycobacteroides abscessus (strain ATCC 19977 / DSM 44196 / CCUG 20993 / CIP 104536 / JCM 13569 / NCTC 13031 / TMC 1543 / L948) (Mycobacterium abscessus).